The primary structure comprises 182 residues: ATP-dependent protease subunit HslV (182 aa).

Residue T6 is part of the active site. The Na(+) site is built by A164, C167, and T170.

Belongs to the peptidase T1B family. HslV subfamily. As to quaternary structure, a double ring-shaped homohexamer of HslV is capped on each side by a ring-shaped HslU homohexamer. The assembly of the HslU/HslV complex is dependent on binding of ATP.

It is found in the cytoplasm. It carries out the reaction ATP-dependent cleavage of peptide bonds with broad specificity.. With respect to regulation, allosterically activated by HslU binding. Protease subunit of a proteasome-like degradation complex believed to be a general protein degrading machinery. This is ATP-dependent protease subunit HslV from Borreliella afzelii (strain PKo) (Borrelia afzelii).